Consider the following 582-residue polypeptide: MSSSLGKEKDSKEKDPKVPSAKEREKEAKASGGFGKESKEKEPKTKGKDAKDGKKDSSAAQPGVAFSVDNTIKRPNPAPGTRKKSSNAEVIKELNKCREENSMRLDLSKRSIHILPSSIKELTQLTELYLYSNKLQSLPAEVGCLVNLMTLALSENSLTSLPDSLDNLKKLRMLDLRHNKLREIPSVVYRLDSLTTLYLRFNRITTVEKDIKNLSKLSMLSIRENKIKQLPAEIGELCNLITLDVAHNQLEHLPKEIGNCTQITNLDLQHNELLDLPDTIGNLSSLSRLGLRYNRLSAIPRSLAKCSALEELNLENNNISTLPESLLSSLVKLNSLTLARNCFQLYPVGGPSQFSTIYSLNMEHNRINKIPFGIFSRAKVLSKLNMKDNQLTSLPLDFGTWTSMVELNLATNQLTKIPEDVSGLVSLEVLILSNNLLKKLPHGLGNLRKLRELDLEENKLESLPNEIAYLKDLQKLVLTNNQLTTLPRGIGHLTNLTHLGLGENLLTHLPEEIGTLENLEELYLNDNPNLHSLPFELALCSKLSIMSIENCPLSHLPPQIVAGGPSFIIQFLKMQGPYRAMV.

Composition is skewed to basic and acidic residues over residues 1 to 29 (MSSS…KEAK) and 36 to 57 (KESK…KKDS). The disordered stretch occupies residues 1–88 (MSSSLGKEKD…PGTRKKSSNA (88 aa)). The RVxF motif; important for interaction with PP1c motif lies at 63–66 (GVAF). 20 LRR repeats span residues 101–122 (NSMR…IKEL), 124–145 (QLTE…VGCL), 147–169 (NLMT…DNLK), 170–191 (KLRM…VYRL), 193–214 (SLTT…IKNL), 216–237 (KLSM…IGEL), 239–260 (NLIT…IGNC), 262–283 (QITN…IGNL), 285–307 (SLSR…AKCS), 308–329 (ALEE…LLSS), 332–353 (KLNS…GPSQ), 356–377 (TIYS…IFSR), 380–400 (VLSK…DFGT), 403–424 (SMVE…VSGL), 426–448 (SLEV…GNLR), 449–470 (KLRE…IAYL), 472–494 (DLQK…GHLT), 495–516 (NLTH…IGTL), 518–540 (NLEE…LALC), and 542–563 (KLSI…IVAG).

The protein belongs to the SHOC2 family. Component of the SHOC2-MRAS-PP1c (SMP) complex consisting of SHOC2, GTP-bound M-Ras/MRAS and the catalytic subunit of protein phosphatase 1 (either PPP1CA, PPP1CB or PPP1CC). SHOC2 and PP1c preferably bind M-Ras/MRAS, but they also bind K-Ras/KRAS, N-Ras/NRAS and H-Ras/HRAS; these interactions are GTP-dependent and both SHOC2 and PP1c are required to form a stable complex. Interacts with PP1c in the absence of Ras GTPases. Interacts with M-Ras/MRAS and RAF1. Interacts with ERBIN; disrupts the interaction with RAF1 and Ras, preventing the activation of the Ras signaling pathway. Interacts with LZTR1.

It is found in the cytoplasm. The protein localises to the nucleus. Its function is as follows. Core component of the SHOC2-MRAS-PP1c (SMP) holophosphatase complex that regulates activation of the MAPK pathway. Acts as a scaffolding protein in the SMP complex. The SMP complex specifically dephosphorylates the inhibitory phosphorylation at 'Ser-259' of RAF1 kinase, 'Ser-365' of BRAF kinase and 'Ser-214' of ARAF kinase, stimulating their kinase activities. The SMP complex enhances the dephosphorylation activity and substrate specificity of PP1c. The polypeptide is Leucine-rich repeat protein SHOC-2 (SHOC2) (Homo sapiens (Human)).